The following is a 335-amino-acid chain: Histidinol-phosphatase (335 aa).

The protein belongs to the PHP hydrolase family. HisK subfamily.

The enzyme catalyses L-histidinol phosphate + H2O = L-histidinol + phosphate. The protein operates within amino-acid biosynthesis; L-histidine biosynthesis; L-histidine from 5-phospho-alpha-D-ribose 1-diphosphate: step 8/9. The chain is Histidinol-phosphatase (HIS2) from Saccharomyces cerevisiae (strain ATCC 204508 / S288c) (Baker's yeast).